A 378-amino-acid chain; its full sequence is Erythronate-4-phosphate dehydrogenase (378 aa).

Substrate contacts are provided by serine 45 and threonine 66. NAD(+) is bound by residues aspartate 146 and threonine 175. Arginine 208 is a catalytic residue. Residue aspartate 232 participates in NAD(+) binding. Residue glutamate 237 is part of the active site. Histidine 254 (proton donor) is an active-site residue. Glycine 257 provides a ligand contact to NAD(+). Tyrosine 258 is a binding site for substrate.

The protein belongs to the D-isomer specific 2-hydroxyacid dehydrogenase family. PdxB subfamily. As to quaternary structure, homodimer.

The protein localises to the cytoplasm. It catalyses the reaction 4-phospho-D-erythronate + NAD(+) = (R)-3-hydroxy-2-oxo-4-phosphooxybutanoate + NADH + H(+). It functions in the pathway cofactor biosynthesis; pyridoxine 5'-phosphate biosynthesis; pyridoxine 5'-phosphate from D-erythrose 4-phosphate: step 2/5. Functionally, catalyzes the oxidation of erythronate-4-phosphate to 3-hydroxy-2-oxo-4-phosphonooxybutanoate. The sequence is that of Erythronate-4-phosphate dehydrogenase from Cronobacter sakazakii (strain ATCC BAA-894) (Enterobacter sakazakii).